Here is a 294-residue protein sequence, read N- to C-terminus: GTP cyclohydrolase FolE2 (294 aa).

Belongs to the GTP cyclohydrolase IV family.

The catalysed reaction is GTP + H2O = 7,8-dihydroneopterin 3'-triphosphate + formate + H(+). It functions in the pathway cofactor biosynthesis; 7,8-dihydroneopterin triphosphate biosynthesis; 7,8-dihydroneopterin triphosphate from GTP: step 1/1. Functionally, converts GTP to 7,8-dihydroneopterin triphosphate. This is GTP cyclohydrolase FolE2 from Acinetobacter baylyi (strain ATCC 33305 / BD413 / ADP1).